Consider the following 848-residue polypeptide: MAKRLVLFVAVVVALVALTVAEGEASEQLQCERELQELQERELKACQQVMDQQLRDISPECHPVVVSPVAGQYEQQIVVPPKGGSFYPGETTPPQQLQQRIFWGIPALLKRYYPSVTCPQQVSYYPGQASPQRPGQGQQPGQGQQGYYPTSPQQPGQWQQPEQGQPRYYPTSPQQSGQLQQPAQGQQPGQGQQGQQPGQGQPGYYPTSSQLQPGQLQQPAQGQQGQQPGQAQQGQQPGQGQQPGQGQQGQQPGQGQQPGQGQQGQQLGQGQQGYYPTSLQQSGQGQPGYYPTSLQQLGQGQSGYYPTSPQQPGQGQQPGQLQQPAQGQQPGQGQQGQQPGQGQQGQQPGQGQQPGQGQPGYYPTSPQQSGQGQPGYYPTSSQQPTQSQQPGQGQQGQQVGQGQQAQQPGQGQQPGQGQPGYYPTSPQQSGQGQPGYYLTSPQQSGQGQQPGQLQQSAQGQKGQQPGQGQQPGQGQQGQQPGQGQQGQQPGQGQPGYYPTSPQQSGQGQQPGQWQQPGQGQPGYYPTSPLQPGQGQPGYDPTSPQQPGQGQQPGQLQQPAQGQQGQQLAQGQQGQQPAQVQQGQRPAQGQQGQQPGQGQQGQQLGQGQQGQQPGQGQQGQQPAQGQQGQQPGQGQQGQQPGQGQQGQQPGQGQQPGQGQPWYYPTSPQESGQGQQPGQWQQPGQGQPGYYLTSPLQLGQGQQGYYPTSLQQPGQGQQPGQWQQSGQGQHWYYPTSPQLSGQGQRPGQWLQPGQGQQGYYPTSPQQPGQGQQLGQWLQPGQGQQGYYPTSLQQTGQGQQSGQGQQGYYSSYHVSVEHQAASLKVAKAQQLAAQLPAMCRLEGGDALSASQ.

Positions 1–21 (MAKRLVLFVAVVVALVALTVA) are cleaved as a signal peptide. Positions 124 to 804 (YYPGQASPQR…GQQSGQGQQG (681 aa)) are disordered. Low complexity-rich tracts occupy residues 126-137 (PGQASPQRPGQG), 145-166 (QGYYPTSPQQPGQWQQPEQGQP), 173-203 (PQQSGQLQQPAQGQQPGQGQQGQQPGQGQPG), 210-240 (QLQPGQLQQPAQGQQGQQPGQAQQGQQPGQG), 263-303 (QGQQ…GQSG), 310-351 (QQPG…PGQG), 359-411 (PGYY…PGQG), 419-468 (PGYY…PGQG), 476-527 (QGQQ…YPTS), 544-659 (QQPG…QGQP), 670-687 (GQGQQPGQWQQPGQGQPG), 709-727 (QQPGQGQQPGQWQQSGQGQ), and 739-795 (GQGQ…TGQG).

This sequence belongs to the gliadin/glutenin family. As to quaternary structure, disulfide-bridge linked aggregates.

Functionally, glutenins are high-molecular weight seed storage proteins of wheat endosperm. Thought to be responsible for the visco-elastic property of wheat dough. The chain is Glutenin, high molecular weight subunit DX5 (GLU-1D-1D) from Triticum aestivum (Wheat).